The chain runs to 136 residues: Gilles de la Tourette syndrome chromosomal region candidate gene 1 protein (136 aa).

Residues 73 to 93 (AICMEVFLFLWFIAPIYACVC) form a helical membrane-spanning segment.

It is found in the membrane. This chain is Gilles de la Tourette syndrome chromosomal region candidate gene 1 protein (GTSCR1), found in Homo sapiens (Human).